The sequence spans 397 residues: CCA-adding enzyme (397 aa).

ATP is bound by residues Gly26 and Arg29. Residues Gly26 and Arg29 each contribute to the CTP site. Residues Asp39 and Asp41 each contribute to the Mg(2+) site. Positions 110, 153, 156, 159, and 162 each coordinate ATP. CTP-binding residues include Arg110, Asp153, Arg156, Arg159, and Arg162.

This sequence belongs to the tRNA nucleotidyltransferase/poly(A) polymerase family. Bacterial CCA-adding enzyme type 3 subfamily. Homodimer. It depends on Mg(2+) as a cofactor.

The catalysed reaction is a tRNA precursor + 2 CTP + ATP = a tRNA with a 3' CCA end + 3 diphosphate. It carries out the reaction a tRNA with a 3' CCA end + 2 CTP + ATP = a tRNA with a 3' CCACCA end + 3 diphosphate. Catalyzes the addition and repair of the essential 3'-terminal CCA sequence in tRNAs without using a nucleic acid template. Adds these three nucleotides in the order of C, C, and A to the tRNA nucleotide-73, using CTP and ATP as substrates and producing inorganic pyrophosphate. tRNA 3'-terminal CCA addition is required both for tRNA processing and repair. Also involved in tRNA surveillance by mediating tandem CCA addition to generate a CCACCA at the 3' terminus of unstable tRNAs. While stable tRNAs receive only 3'-terminal CCA, unstable tRNAs are marked with CCACCA and rapidly degraded. The polypeptide is CCA-adding enzyme (Bacillus cereus (strain AH187)).